Consider the following 191-residue polypeptide: Fe/S biogenesis protein NfuA (191 aa).

2 residues coordinate [4Fe-4S] cluster: Cys149 and Cys152.

This sequence belongs to the NfuA family. As to quaternary structure, homodimer. The cofactor is [4Fe-4S] cluster.

In terms of biological role, involved in iron-sulfur cluster biogenesis. Binds a 4Fe-4S cluster, can transfer this cluster to apoproteins, and thereby intervenes in the maturation of Fe/S proteins. Could also act as a scaffold/chaperone for damaged Fe/S proteins. The chain is Fe/S biogenesis protein NfuA from Salmonella arizonae (strain ATCC BAA-731 / CDC346-86 / RSK2980).